Here is a 706-residue protein sequence, read N- to C-terminus: Acyl-coenzyme A oxidase (706 aa).

The interval 682–706 is disordered; it reads MLNRPSKEERERFEKSTETAKILSK. Residues 686-699 show a composition bias toward basic and acidic residues; that stretch reads PSKEERERFEKSTE.

Belongs to the acyl-CoA oxidase family. It depends on FAD as a cofactor.

It localises to the peroxisome. The enzyme catalyses a 2,3-saturated acyl-CoA + O2 = a (2E)-enoyl-CoA + H2O2. Its pathway is lipid metabolism; peroxisomal fatty acid beta-oxidation. This Debaryomyces hansenii (strain ATCC 36239 / CBS 767 / BCRC 21394 / JCM 1990 / NBRC 0083 / IGC 2968) (Yeast) protein is Acyl-coenzyme A oxidase (POX1).